The following is an 877-amino-acid chain: Hopanoid transporter HpnN (877 aa).

The Cytoplasmic portion of the chain corresponds to 1 to 16 (MVTSLIVRLVAWSVRR). The helical transmembrane segment at 17–37 (PVWVVVLSLLIAAFSGVYVAR) threads the bilayer. Residues 38–279 (HFKINTDISK…FSSVEDGAAL (242 aa)) lie on the Periplasmic side of the membrane. Residues 280-295 (NGVVTLLVVFVILWLA) form a helical membrane-spanning segment. Topologically, residues 296 to 299 (LRSK) are cytoplasmic. A helical transmembrane segment spans residues 300–323 (RMIASVLVTLFVGLVVTAALGLAM). The SSD domain occupies 302 to 428 (IASVLVTLFV…LTLLPALLRL (127 aa)). At 324–332 (VGSLNMISV) the chain is on the periplasmic side. Residues 333–351 (AFMVLFVGLGVDFSIQYGV) form a helical membrane-spanning segment. Residues 352–373 (KYREERFRDERIDHALIGAAHS) lie on the Cytoplasmic side of the membrane. The helical transmembrane segment at 374-394 (MGMPLALATTAVAASFFSFIP) threads the bilayer. The Periplasmic portion of the chain corresponds to 395-399 (TAYRG). The chain crosses the membrane as a helical span at residues 400–426 (VSELGLIAGVGMFVALLTTLTLLPALL). The Cytoplasmic portion of the chain corresponds to 427–452 (RLFAPPGESKTPGFPWLAPVDDYLDR). Residues 453–472 (HRKPILIGTLAVVIGALPLL) traverse the membrane as a helical segment. Topologically, residues 473-718 (AFLHFDFNPL…ILHSANTIIS (246 aa)) are periplasmic. Residues 719-739 (AFLHAALWSIISITILLWITL) traverse the membrane as a helical segment. Residues 740 to 743 (RRFG) are Cytoplasmic-facing. The helical transmembrane segment at 744-766 (DVLRTLVPLLVSGIVTLEMCVVL) threads the bilayer. At 767-774 (GMSLNFAN) the chain is on the periplasmic side. Residues 775 to 794 (IIALPLMLGVGVAFKVYFVM) traverse the membrane as a helical segment. Residues 795-809 (AWRAGQTGLLHSSLT) lie on the Cytoplasmic side of the membrane. A helical transmembrane segment spans residues 810–827 (HAVLFSAATTATAFGSLW). The Periplasmic portion of the chain corresponds to 828-836 (LSHHPGTSS). A helical membrane pass occupies residues 837–858 (MGKLLALALTCTLIGAVVFQPV). The Cytoplasmic segment spans residues 859–877 (LMGKPRVKRAKNQSQGINE).

It belongs to the resistance-nodulation-cell division (RND) (TC 2.A.6) family. MmpL subfamily. As to quaternary structure, homodimer.

It is found in the cell inner membrane. Functionally, essential for hopanoid transport from the cytoplasmic to the outer membrane. Is capable of shuttling hopanoid lipids from the inner membrane to the periplasm, where they probably spontaneously insert to the inner leaflet of the outer membrane, strengthening the cell envelope. May be a proton-motive-force (PMF)-dependent transporter. Is critical for multidrug resistance and cell wall remodeling in Burkholderia. The protein is Hopanoid transporter HpnN of Burkholderia multivorans (strain ATCC 17616 / 249).